Reading from the N-terminus, the 188-residue chain is Elongation factor P (188 aa).

Belongs to the elongation factor P family.

The protein localises to the cytoplasm. It participates in protein biosynthesis; polypeptide chain elongation. Its function is as follows. Involved in peptide bond synthesis. Stimulates efficient translation and peptide-bond synthesis on native or reconstituted 70S ribosomes in vitro. Probably functions indirectly by altering the affinity of the ribosome for aminoacyl-tRNA, thus increasing their reactivity as acceptors for peptidyl transferase. This is Elongation factor P from Sulfurovum sp. (strain NBC37-1).